A 205-amino-acid polypeptide reads, in one-letter code: MAHTLYDRTIAFASICQAVKLVQLVAQNGNCDREILEACLNSITVTNPSNTIEIYGNESNLRLGLETLSQEIDSSPTGSEITRYLVSVMALERKLSGRRDSMGQLGDRIDVIIRQKDHFDLLDDQMVSNLASIYLDIISPLGPRIQVTGAPAHLQQQQVQHKVRALLLAAVRGAVLWRQVGGKRRHLIFGRKQMVEQAKILLARC.

It belongs to the HflD family.

The protein localises to the cytoplasm. Its subcellular location is the cell inner membrane. This chain is High frequency lysogenization protein HflD homolog, found in Photobacterium profundum (strain SS9).